The primary structure comprises 901 residues: Alpha-actinin-3 (901 aa).

Met1 bears the N-acetylmethionine mark. Positions 1–261 (MMMVLQPEGL…IMTYVSCFYH (261 aa)) are actin-binding. 2 Calponin-homology (CH) domains span residues 45–149 (KQQR…LRFA) and 158–264 (TSAK…HAFA). 4 Spectrin repeats span residues 288–398 (KLME…WLLS), 408–513 (HLAE…ALER), 523–634 (QLQL…MLQE), and 644–747 (RLRR…EVEN). 2 consecutive EF-hand domains span residues 760-795 (EQLNEFRASFNHFDRKRNGMMEPDDFRACLISMGYD) and 796-831 (LGEVEFARIMTMVDPNAAGVVTFQAFIDFMTRETAE). Ca(2+)-binding residues include Asp773, Asn777, Met779, Asp784, Asp809, and Asn811.

This sequence belongs to the alpha-actinin family. As to quaternary structure, homodimer; antiparallel. Also forms heterodimers with ACTN2. Interacts with MYOZ1.

F-actin cross-linking protein which is thought to anchor actin to a variety of intracellular structures. This is a bundling protein. In Bos taurus (Bovine), this protein is Alpha-actinin-3 (ACTN3).